The chain runs to 196 residues: MTWQSDYSRDYEVKNHMECQNRSDKYIWSPHDAYFYKGLSELIVDIDRLIYLSLEKIRKDFVFINLNTDSLSEFINRDNEWLSAVKGKQVVLIAARKSEALANYWYYNSNIRGVVYAGLSRDIRKELAYVINGRFLRKDIKKDKITDREMEIIRMTAQGMQPKSIARIENCSVKTVYTHRRNAEAKLYSKIYKLVQ.

The region spanning 138 to 196 is the HTH luxR-type domain; sequence KDIKKDKITDREMEIIRMTAQGMQPKSIARIENCSVKTVYTHRRNAEAKLYSKIYKLVQ. The segment at residues 162–181 is a DNA-binding region (H-T-H motif); the sequence is PKSIARIENCSVKTVYTHRR.

Belongs to the EcpR/MatA family.

Its subcellular location is the cytoplasm. In terms of biological role, part of the ecpRABCDE operon, which encodes the E.coli common pilus (ECP). ECP is found in both commensal and pathogenic strains and plays a dual role in early-stage biofilm development and host cell recognition. Positively regulates the expression of the ecp operon. The sequence is that of HTH-type transcriptional regulator EcpR (ecpR) from Escherichia coli (strain SE11).